A 230-amino-acid chain; its full sequence is Potassium/proton antiporter CemA (230 aa).

Helical transmembrane passes span L7 to F27, I106 to L126, L145 to H165, and L181 to L201.

This sequence belongs to the CemA family.

The protein localises to the plastid. It is found in the chloroplast inner membrane. It carries out the reaction K(+)(in) + H(+)(out) = K(+)(out) + H(+)(in). Contributes to K(+)/H(+) antiport activity by supporting proton efflux to control proton extrusion and homeostasis in chloroplasts in a light-dependent manner to modulate photosynthesis. Prevents excessive induction of non-photochemical quenching (NPQ) under continuous-light conditions. Indirectly promotes efficient inorganic carbon uptake into chloroplasts. This is Potassium/proton antiporter CemA from Lolium perenne (Perennial ryegrass).